Here is a 196-residue protein sequence, read N- to C-terminus: uncharacterized protein (196 aa).

The protein to H.influenzae HI_0431.

This is an uncharacterized protein from Escherichia coli (strain K12).